Reading from the N-terminus, the 238-residue chain is Putative ABC transporter ATP-binding protein AF_1841 (238 aa).

One can recognise an ABC transporter domain in the interval I8 to I238. G41–S48 is a binding site for ATP.

Belongs to the ABC transporter superfamily.

The protein localises to the cell membrane. Its function is as follows. Probably part of an ABC transporter complex. Responsible for energy coupling to the transport system. In Archaeoglobus fulgidus (strain ATCC 49558 / DSM 4304 / JCM 9628 / NBRC 100126 / VC-16), this protein is Putative ABC transporter ATP-binding protein AF_1841.